Consider the following 428-residue polypeptide: Histidine--tRNA ligase (428 aa).

Belongs to the class-II aminoacyl-tRNA synthetase family. As to quaternary structure, homodimer.

It is found in the cytoplasm. The enzyme catalyses tRNA(His) + L-histidine + ATP = L-histidyl-tRNA(His) + AMP + diphosphate + H(+). The sequence is that of Histidine--tRNA ligase (hisS) from Chlamydia muridarum (strain MoPn / Nigg).